Reading from the N-terminus, the 430-residue chain is MKTQMNYAKEGVFTKEMQIVAQKENLSKDFLLENIACGKIIIPANINHKSLDPNGIGFGLRTKVNVNLGVSNDCVDYSEEMKKVELAHKFDIEAIMDLSNYGKTSRFRDELVNVSKAMIGTVPVYDAVGFLEKDLKQIGAKDFLDVVYHHAKSGVDFMTIHAGINSRAAHIFKQSKRLTNIVSRGGSVLYAWMMMKDAENPFFEYYDDLLDICLKYDVTLSLGDALRPGSTHDASDGAQISELIELSLLTQRAWDVGVQVMIEGPGHMAINEIEVNMQLEKRLCKGAPFYVLGPLVTDIGAGYDHISGAIGGAVAAASGADMLCYVTPAEHLRLPNLEDVREGIVATKIAAHAGDIAKLPKERARDDEMSKARQEIDWEKMFKLAIDGEKAKKMFNERRPDDLNSCSMCGKMCAMNTMNQILKGEDVSLA.

Substrate is bound by residues Asn67, Met96, Tyr125, His161, 183-185 (SRG), 224-227 (DALR), and Glu263. A Zn(2+)-binding site is contributed by His267. Tyr290 contacts substrate. Residue His331 participates in Zn(2+) binding. Residues Cys406, Cys409, and Cys413 each coordinate [4Fe-4S] cluster.

It belongs to the ThiC family. In terms of assembly, homodimer. It depends on [4Fe-4S] cluster as a cofactor.

The enzyme catalyses 5-amino-1-(5-phospho-beta-D-ribosyl)imidazole + S-adenosyl-L-methionine = 4-amino-2-methyl-5-(phosphooxymethyl)pyrimidine + CO + 5'-deoxyadenosine + formate + L-methionine + 3 H(+). Its pathway is cofactor biosynthesis; thiamine diphosphate biosynthesis. Catalyzes the synthesis of the hydroxymethylpyrimidine phosphate (HMP-P) moiety of thiamine from aminoimidazole ribotide (AIR) in a radical S-adenosyl-L-methionine (SAM)-dependent reaction. This is Phosphomethylpyrimidine synthase from Campylobacter jejuni subsp. jejuni serotype O:6 (strain 81116 / NCTC 11828).